Reading from the N-terminus, the 366-residue chain is Methylthioribose-1-phosphate isomerase (366 aa).

Residues 53 to 55 (RGA), Arg-90, and Gln-203 each bind substrate. The active-site Proton donor is the Asp-244. Substrate is bound at residue 254–255 (NK).

The protein belongs to the eIF-2B alpha/beta/delta subunits family. MtnA subfamily.

The catalysed reaction is 5-(methylsulfanyl)-alpha-D-ribose 1-phosphate = 5-(methylsulfanyl)-D-ribulose 1-phosphate. It functions in the pathway amino-acid biosynthesis; L-methionine biosynthesis via salvage pathway; L-methionine from S-methyl-5-thio-alpha-D-ribose 1-phosphate: step 1/6. Its function is as follows. Catalyzes the interconversion of methylthioribose-1-phosphate (MTR-1-P) into methylthioribulose-1-phosphate (MTRu-1-P). The protein is Methylthioribose-1-phosphate isomerase of Methylocella silvestris (strain DSM 15510 / CIP 108128 / LMG 27833 / NCIMB 13906 / BL2).